The chain runs to 291 residues: 4-hydroxy-tetrahydrodipicolinate synthase (291 aa).

Thr44 contacts pyruvate. Tyr132 serves as the catalytic Proton donor/acceptor. Lys160 serves as the catalytic Schiff-base intermediate with substrate. Ile202 provides a ligand contact to pyruvate.

It belongs to the DapA family. Homotetramer; dimer of dimers.

The protein resides in the cytoplasm. It carries out the reaction L-aspartate 4-semialdehyde + pyruvate = (2S,4S)-4-hydroxy-2,3,4,5-tetrahydrodipicolinate + H2O + H(+). It participates in amino-acid biosynthesis; L-lysine biosynthesis via DAP pathway; (S)-tetrahydrodipicolinate from L-aspartate: step 3/4. In terms of biological role, catalyzes the condensation of (S)-aspartate-beta-semialdehyde [(S)-ASA] and pyruvate to 4-hydroxy-tetrahydrodipicolinate (HTPA). This Syntrophus aciditrophicus (strain SB) protein is 4-hydroxy-tetrahydrodipicolinate synthase.